The chain runs to 180 residues: CD-NTase/cGAS isopeptidase (180 aa).

An MPN domain is found at 33–165 (IVISSSTIEQ…AGSYSLSASV (133 aa)). The active-site Proton donor/acceptor is the E54. Zn(2+)-binding residues include H115, H117, and D128.

It belongs to the peptidase M67B family. Cap3 isopeptidase subfamily.

Its function is as follows. Metalloprotease priming reversal component of a CBASS antivirus system. CBASS (cyclic oligonucleotide-based antiphage signaling system) provides immunity against bacteriophages. The CD-NTase protein (CdnD) synthesizes cyclic nucleotides in response to infection; these serve as specific second messenger signals. The signals activate a diverse range of effectors, leading to bacterial cell death and thus abortive phage infection. A type II-C(AAG) CBASS system. In terms of biological role, reverses the primed state of DncV, the CD-NTase. Cleaves a CdnD-GFP (green fluorescent protein) fusion protein precisely at the C-terminus of CdnD. Overexpression decreases the efficacy of CBASS protection against phage T2. Antagonism of phage defense upon overexpression is CBASS-system specific, Cap3 from this bacteria only antagonizes its cognate CBASS system and not that of C.freundii, E.coli or V.cholerae. Functionally, protects E.coli against phage T2 infection. When the cdnD-cap2-cap3-cap4 operon is introduced in E.coli there is a more than 10(3) decrease in the efficiency of T2 plaque formation. The operon does not protect against phage T5 and only about 10-fold against T7. The sequence is that of CD-NTase/cGAS isopeptidase from Enterobacter hormaechei subsp. hoffmannii (strain UCI 50).